The following is a 212-amino-acid chain: NADH dehydrogenase [ubiquinone] iron-sulfur protein 8, mitochondrial (212 aa).

A mitochondrion-targeting transit peptide spans 1–36; sequence MRCLTMPMLLRALAQAQAARAGHASVRGLHSSAVAA. 2 4Fe-4S ferredoxin-type domains span residues 104–133 and 143–172; these read RRYPSGEERCIACKLCEAVCPAQAITIEAE and TRYDIDMTKCIYCGFCQEACPVDAIVEGPN. 8 residues coordinate [4Fe-4S] cluster: C113, C116, C119, C123, C152, C155, C158, and C162.

Belongs to the complex I 23 kDa subunit family. In terms of assembly, core subunit of respiratory chain NADH dehydrogenase (Complex I) which is composed of 45 different subunits. This is a component of the iron-sulfur (IP) fragment of the enzyme. Interacts with RAB5IF. It depends on [4Fe-4S] cluster as a cofactor.

Its subcellular location is the mitochondrion inner membrane. It catalyses the reaction a ubiquinone + NADH + 5 H(+)(in) = a ubiquinol + NAD(+) + 4 H(+)(out). Functionally, core subunit of the mitochondrial membrane respiratory chain NADH dehydrogenase (Complex I) which catalyzes electron transfer from NADH through the respiratory chain, using ubiquinone as an electron acceptor. Essential for the catalytic activity and assembly of complex I. This is NADH dehydrogenase [ubiquinone] iron-sulfur protein 8, mitochondrial (NDUFS8) from Bos taurus (Bovine).